Here is a 394-residue protein sequence, read N- to C-terminus: Chorismate synthase (394 aa).

The NADP(+) site is built by Arg40 and Arg46. Residues 135–137 (RAS) and 255–256 (QA) each bind FMN. The interval 270–291 (RRRGSGAHDEIEPAGAGSRRVR) is disordered. FMN is bound by residues Gly302, 317-321 (KPISS), and Arg343.

This sequence belongs to the chorismate synthase family. In terms of assembly, homotetramer. It depends on FMNH2 as a cofactor.

It catalyses the reaction 5-O-(1-carboxyvinyl)-3-phosphoshikimate = chorismate + phosphate. The protein operates within metabolic intermediate biosynthesis; chorismate biosynthesis; chorismate from D-erythrose 4-phosphate and phosphoenolpyruvate: step 7/7. Functionally, catalyzes the anti-1,4-elimination of the C-3 phosphate and the C-6 proR hydrogen from 5-enolpyruvylshikimate-3-phosphate (EPSP) to yield chorismate, which is the branch point compound that serves as the starting substrate for the three terminal pathways of aromatic amino acid biosynthesis. This reaction introduces a second double bond into the aromatic ring system. The sequence is that of Chorismate synthase from Frankia casuarinae (strain DSM 45818 / CECT 9043 / HFP020203 / CcI3).